The primary structure comprises 192 residues: Putative inactive ribonuclease 11 (192 aa).

Positions 1-15 (MAVFLLLLALGLLLA) are cleaved as a signal peptide. Residues 21–54 (RMKGTTEQFSQEEMQPAAKQTLEESANSTLSDKN) form a disordered region. The span at 43–54 (EESANSTLSDKN) shows a compositional bias: polar residues. N-linked (GlcNAc...) asparagine glycosylation is found at Asn-47 and Asn-104.

It belongs to the pancreatic ribonuclease family.

The protein localises to the secreted. This is Putative inactive ribonuclease 11 (Rnase11) from Mus musculus (Mouse).